Here is a 102-residue protein sequence, read N- to C-terminus: Small ribosomal subunit protein uS10 (102 aa).

Belongs to the universal ribosomal protein uS10 family. In terms of assembly, part of the 30S ribosomal subunit.

In terms of biological role, involved in the binding of tRNA to the ribosomes. This chain is Small ribosomal subunit protein uS10, found in Xanthobacter autotrophicus (strain ATCC BAA-1158 / Py2).